Reading from the N-terminus, the 180-residue chain is Protein GrpE (180 aa).

A disordered region spans residues 1 to 21 (MSEEVKEQNLPEVEPVQEAAS).

It belongs to the GrpE family. In terms of assembly, homodimer.

It localises to the cytoplasm. Its function is as follows. Participates actively in the response to hyperosmotic and heat shock by preventing the aggregation of stress-denatured proteins, in association with DnaK and GrpE. It is the nucleotide exchange factor for DnaK and may function as a thermosensor. Unfolded proteins bind initially to DnaJ; upon interaction with the DnaJ-bound protein, DnaK hydrolyzes its bound ATP, resulting in the formation of a stable complex. GrpE releases ADP from DnaK; ATP binding to DnaK triggers the release of the substrate protein, thus completing the reaction cycle. Several rounds of ATP-dependent interactions between DnaJ, DnaK and GrpE are required for fully efficient folding. This is Protein GrpE from Campylobacter concisus (strain 13826).